The following is a 485-amino-acid chain: NADH-quinone oxidoreductase subunit N (485 aa).

14 consecutive transmembrane segments (helical) span residues 8–28, 35–55, 71–91, 105–125, 127–147, 159–179, 203–223, 235–255, 271–291, 297–317, 326–346, 373–393, 408–430, and 455–475; these read LIAL…MLSI, FLNA…LWFV, GFAM…CTFA, FYLL…ANHL, SLFL…GYAF, YTIL…LVYA, LLAG…LVPF, PAPV…GVVM, VVLA…ALSQ, LLGY…IALQ, VGVY…VVSL, AAVM…LGFI, WWLV…RVAV, and IVVL…QPLI.

It belongs to the complex I subunit 2 family. In terms of assembly, NDH-1 is composed of 13 different subunits. Subunits NuoA, H, J, K, L, M, N constitute the membrane sector of the complex.

It localises to the cell inner membrane. The enzyme catalyses a quinone + NADH + 5 H(+)(in) = a quinol + NAD(+) + 4 H(+)(out). In terms of biological role, NDH-1 shuttles electrons from NADH, via FMN and iron-sulfur (Fe-S) centers, to quinones in the respiratory chain. The immediate electron acceptor for the enzyme in this species is believed to be ubiquinone. Couples the redox reaction to proton translocation (for every two electrons transferred, four hydrogen ions are translocated across the cytoplasmic membrane), and thus conserves the redox energy in a proton gradient. The polypeptide is NADH-quinone oxidoreductase subunit N (Shigella dysenteriae serotype 1 (strain Sd197)).